Reading from the N-terminus, the 101-residue chain is Cell division suppressor protein YneA (101 aa).

A LysM domain is found at 35 to 86; that stretch reads MTVTVASGDTLWGLAKQYEPAHGLSPDEFIRWVVDVNRLPSSRLTAGEQIVI.

This sequence belongs to the YneA family.

The protein localises to the cytoplasm. In terms of biological role, inhibits cell division during the SOS response. Affects a later stage of the cell division protein assembly, after the assembly of the Z ring, by probably suppressing recruitment of FtsL and/or DivIC to the division machinery. The sequence is that of Cell division suppressor protein YneA from Geobacillus thermodenitrificans (strain NG80-2).